A 373-amino-acid chain; its full sequence is 8-amino-7-oxononanoate synthase (373 aa).

Arg-16 contacts substrate. 93-94 (GF) contributes to the pyridoxal 5'-phosphate binding site. His-118 serves as a coordination point for substrate. Pyridoxal 5'-phosphate contacts are provided by residues Ser-165, 190 to 193 (DEAH), and 222 to 225 (TFSK). Position 225 is an N6-(pyridoxal phosphate)lysine (Lys-225). Thr-334 contacts substrate.

It belongs to the class-II pyridoxal-phosphate-dependent aminotransferase family. BioF subfamily. In terms of assembly, homodimer. The cofactor is pyridoxal 5'-phosphate.

The catalysed reaction is 6-carboxyhexanoyl-[ACP] + L-alanine + H(+) = (8S)-8-amino-7-oxononanoate + holo-[ACP] + CO2. It functions in the pathway cofactor biosynthesis; biotin biosynthesis. Functionally, catalyzes the decarboxylative condensation of pimeloyl-[acyl-carrier protein] and L-alanine to produce 8-amino-7-oxononanoate (AON), [acyl-carrier protein], and carbon dioxide. In Helicobacter pylori (strain J99 / ATCC 700824) (Campylobacter pylori J99), this protein is 8-amino-7-oxononanoate synthase.